Consider the following 121-residue polypeptide: Large ribosomal subunit protein uL14 (121 aa).

It belongs to the universal ribosomal protein uL14 family. Part of the 50S ribosomal subunit. Forms a cluster with proteins L3 and L19. In the 70S ribosome, L14 and L19 interact and together make contacts with the 16S rRNA in bridges B5 and B8.

Its function is as follows. Binds to 23S rRNA. Forms part of two intersubunit bridges in the 70S ribosome. The protein is Large ribosomal subunit protein uL14 of Bacteroides fragilis (strain ATCC 25285 / DSM 2151 / CCUG 4856 / JCM 11019 / LMG 10263 / NCTC 9343 / Onslow / VPI 2553 / EN-2).